The primary structure comprises 347 residues: METSLISPMKENNTAQPQQREENTQQNLNAAVPIKQQSPGLLPEALEVGVKPDPASQILATQEIENPVAGFEGDSDKFHISTDEMAEHLQASDLWYCPDGSFVKKIIVHGHGLDKPKLGSKCRVLALGFPFGSGMPEGWTELTIGTGQWREKTWGELTEKCLESMRQGEEAKIHLPGSSTPLAKLRLDSFTNGRDSWELEAVEKEALAKEEHRRGTELFRAGNPQGAARCYGRALRLLLTLPPPGPPERTILHANLAACQLLLGHPQLAAQSCDRVLEREPGHLKALYRRGVAQAALGDLDKATADLKKVLAVDPKNRAAKEELGKVVIQGKIQDAGLARGLRKMFS.

Residues 1 to 36 (METSLISPMKENNTAQPQQREENTQQNLNAAVPIKQ) form a disordered region. The residue at position 3 (Thr3) is a Phosphothreonine. TPR repeat units follow at residues 208 to 241 (AKEE…LLTL), 250 to 283 (TILH…EPGH), and 284 to 317 (LKAL…DPKN).

Forms a ternary complex with CDKN1A/p21 and HSP90AB1/Hsp90.

Its function is as follows. May be involved in response to X-ray. Regulates p21 protein stability by binding to Hsp90 and p21. The sequence is that of FK506-binding protein-like (Fkbpl) from Rattus norvegicus (Rat).